The sequence spans 100 residues: Protein translation factor SUI1 homolog (100 aa).

It belongs to the SUI1 family.

In Thermoplasma volcanium (strain ATCC 51530 / DSM 4299 / JCM 9571 / NBRC 15438 / GSS1), this protein is Protein translation factor SUI1 homolog.